A 605-amino-acid polypeptide reads, in one-letter code: UvrABC system protein C (605 aa).

Positions Ser13–Val92 constitute a GIY-YIG domain. Residues Glu205–Met240 form the UVR domain.

This sequence belongs to the UvrC family. Interacts with UvrB in an incision complex.

It localises to the cytoplasm. In terms of biological role, the UvrABC repair system catalyzes the recognition and processing of DNA lesions. UvrC both incises the 5' and 3' sides of the lesion. The N-terminal half is responsible for the 3' incision and the C-terminal half is responsible for the 5' incision. The sequence is that of UvrABC system protein C from Clostridioides difficile (strain 630) (Peptoclostridium difficile).